Reading from the N-terminus, the 293-residue chain is Ribosomal protein L11 methyltransferase (293 aa).

Positions 145, 166, 188, and 230 each coordinate S-adenosyl-L-methionine.

Belongs to the methyltransferase superfamily. PrmA family.

It is found in the cytoplasm. The catalysed reaction is L-lysyl-[protein] + 3 S-adenosyl-L-methionine = N(6),N(6),N(6)-trimethyl-L-lysyl-[protein] + 3 S-adenosyl-L-homocysteine + 3 H(+). Its function is as follows. Methylates ribosomal protein L11. The sequence is that of Ribosomal protein L11 methyltransferase from Shewanella halifaxensis (strain HAW-EB4).